The following is a 435-amino-acid chain: MSVPPFTIRPAAPRLDGPTGPVAVAPGVHWVGALDPGLRNFDVILKTANGTTYNAYAVRGSEGVAVIDTVKAEFAGDFFARLEAVARYDEIRLIVLNHLEPDHTGAVPELLRRAPQAQVRLSPRGLPMLRALLKDDFERYDIKGVTTGQSVSLGDRICSFFTTPFVHWPDTQCTWLAAERVLFTCDLFGSHYCDGRLFNDLVGDFRFSFEYYFDRIMRPFRSFVAQVLDLIEPLDFGIIAPAHGPILRSHPRDYLTHTRRLISSWLAAETGSEKTLLIFYVSAYRATAQLAQAIHDGAAESPDVRVSLFDLEGGEITPFLDLIEEADGIALGTPTINGDAVRTIWEMLAALVDIETRGKLGAAFGSYGWSGEAVRLVETRLQGLKMRLPEPGLRVKLHPSAAELEEGRAFGRRLADHLTGRARPREVDFAEIAAR.

A zinc metallo-hydrolase region spans residues 48-228 (ANGTTYNAYA…PFRSFVAQVL (181 aa)). Fe cation is bound by residues histidine 98, glutamate 100, aspartate 102, histidine 167, aspartate 186, and histidine 243. Residues 276-415 (LLIFYVSAYR…EGRAFGRRLA (140 aa)) form the Flavodoxin-like domain.

It in the N-terminal section; belongs to the zinc metallo-hydrolase group 3 family. In terms of assembly, homodimer. The cofactor is FMN. It depends on Fe cation as a cofactor.

Low-potential electron donor to a number of redox enzymes. This is Type A flavoprotein fprA (fprA) from Rhodobacter capsulatus (Rhodopseudomonas capsulata).